The primary structure comprises 286 residues: Bifunctional protein FolD (286 aa).

NADP(+) is bound by residues 165–167 and S190; that span reads GRS.

It belongs to the tetrahydrofolate dehydrogenase/cyclohydrolase family. Homodimer.

It carries out the reaction (6R)-5,10-methylene-5,6,7,8-tetrahydrofolate + NADP(+) = (6R)-5,10-methenyltetrahydrofolate + NADPH. It catalyses the reaction (6R)-5,10-methenyltetrahydrofolate + H2O = (6R)-10-formyltetrahydrofolate + H(+). The protein operates within one-carbon metabolism; tetrahydrofolate interconversion. In terms of biological role, catalyzes the oxidation of 5,10-methylenetetrahydrofolate to 5,10-methenyltetrahydrofolate and then the hydrolysis of 5,10-methenyltetrahydrofolate to 10-formyltetrahydrofolate. The sequence is that of Bifunctional protein FolD from Staphylococcus epidermidis (strain ATCC 35984 / DSM 28319 / BCRC 17069 / CCUG 31568 / BM 3577 / RP62A).